Reading from the N-terminus, the 175-residue chain is Peptide deformylase (175 aa).

Cys-96 and His-138 together coordinate Fe cation. Glu-139 is a catalytic residue. His-142 serves as a coordination point for Fe cation.

This sequence belongs to the polypeptide deformylase family. Requires Fe(2+) as cofactor.

The catalysed reaction is N-terminal N-formyl-L-methionyl-[peptide] + H2O = N-terminal L-methionyl-[peptide] + formate. Removes the formyl group from the N-terminal Met of newly synthesized proteins. Requires at least a dipeptide for an efficient rate of reaction. N-terminal L-methionine is a prerequisite for activity but the enzyme has broad specificity at other positions. The polypeptide is Peptide deformylase (Rhodopseudomonas palustris (strain ATCC BAA-98 / CGA009)).